We begin with the raw amino-acid sequence, 78 residues long: DNA-directed RNA polymerase subunit omega (78 aa).

This sequence belongs to the RNA polymerase subunit omega family. As to quaternary structure, in cyanobacteria the RNAP catalytic core is composed of 2 alpha, 1 beta, 1 beta', 1 gamma and 1 omega subunit. When a sigma factor is associated with the core the holoenzyme is formed, which can initiate transcription.

It catalyses the reaction RNA(n) + a ribonucleoside 5'-triphosphate = RNA(n+1) + diphosphate. Its function is as follows. Promotes RNA polymerase assembly. Latches the N- and C-terminal regions of the beta' subunit thereby facilitating its interaction with the beta and alpha subunits. The chain is DNA-directed RNA polymerase subunit omega from Nostoc punctiforme (strain ATCC 29133 / PCC 73102).